The chain runs to 100 residues: Tachykinin-4 (100 aa).

The first 19 residues, 1–19 (MPSSVTLLLLMGLSVCTSA), serve as a signal peptide directing secretion. Propeptides lie at residues 20 to 55 (EDGGEEQTLGAEAGPWVTVTLEAGAVASIQLQLQEV) and 85 to 100 (RASSTKGSVDEDQGAE). The segment at 80-100 (GLLGRRASSTKGSVDEDQGAE) is disordered.

The protein belongs to the tachykinin family.

It localises to the secreted. In terms of biological role, tachykinins are active peptides which excite neurons, evoke behavioral responses, are potent vasodilators and secretagogues, and contract (directly or indirectly) many smooth muscles. The chain is Tachykinin-4 from Oryctolagus cuniculus (Rabbit).